We begin with the raw amino-acid sequence, 84 residues long: Beta-defensin 119 (84 aa).

The first 21 residues, Met-1–Gly-21, serve as a signal peptide directing secretion. 3 cysteine pairs are disulfide-bonded: Cys-28-Cys-55, Cys-35-Cys-49, and Cys-39-Cys-56.

Belongs to the beta-defensin family.

It localises to the secreted. Has antibacterial activity. This chain is Beta-defensin 119 (DEFB119), found in Pongo pygmaeus (Bornean orangutan).